A 426-amino-acid chain; its full sequence is Enolase (426 aa).

Residue Q163 participates in (2R)-2-phosphoglycerate binding. Residue E205 is the Proton donor of the active site. Residues D242, E283, and D310 each contribute to the Mg(2+) site. 4 residues coordinate (2R)-2-phosphoglycerate: K335, R364, S365, and K386. The Proton acceptor role is filled by K335.

Belongs to the enolase family. Mg(2+) is required as a cofactor.

The protein resides in the cytoplasm. It is found in the secreted. It localises to the cell surface. The catalysed reaction is (2R)-2-phosphoglycerate = phosphoenolpyruvate + H2O. The protein operates within carbohydrate degradation; glycolysis; pyruvate from D-glyceraldehyde 3-phosphate: step 4/5. Catalyzes the reversible conversion of 2-phosphoglycerate (2-PG) into phosphoenolpyruvate (PEP). It is essential for the degradation of carbohydrates via glycolysis. This chain is Enolase, found in Pseudarthrobacter chlorophenolicus (strain ATCC 700700 / DSM 12829 / CIP 107037 / JCM 12360 / KCTC 9906 / NCIMB 13794 / A6) (Arthrobacter chlorophenolicus).